A 620-amino-acid chain; its full sequence is Palmitoyltransferase ZDHHC17 (620 aa).

Residues 1–292 are Cytoplasmic-facing; that stretch reads MADALVGYEK…LKMDKEFRQK (292 aa). ANK repeat units lie at residues 77-106, 111-140, 144-173, 177-207, 212-241, and 245-274; these read ENVT…IVDQ, LNST…DPSL, EGCS…DVDM, NGMT…SVNL, HKNT…NVDA, and KGET…AKGY. Helical transmembrane passes span 293–313 and 314–334; these read VMLG…DLDI and DSWL…QFLS. Residues 335–345 lie on the Cytoplasmic side of the membrane; the sequence is KSFFDHSMHSA. A helical transmembrane segment spans residues 346-366; that stretch reads LPLGIYLATKFWMYITWFYWF. Residues 367-369 lie on the Lumenal side of the membrane; sequence WND. The helical transmembrane segment at 370 to 390 threads the bilayer; the sequence is LPFVTIHLPFLLNSLALFYNF. The Cytoplasmic portion of the chain corresponds to 391 to 469; that stretch reads GKSWKSDPGI…NCVGSGNHRY (79 aa). The 51-residue stretch at 425-475 folds into the DHHC domain; it reads IFCSTCLIRKPIRSKHCAVCNRCIAKFDHHCPWVGNCVGSGNHRYFMGYLF. Cys455 functions as the S-palmitoyl cysteine intermediate in the catalytic mechanism. The chain crosses the membrane as a helical span at residues 470–490; the sequence is FMGYLFFLLCMICWMMYGCIC. Residues 491-504 are Lumenal-facing; it reads YWRIHCATSYTKDG. The chain crosses the membrane as a helical span at residues 505–524; sequence FWIYITQIATCSPWMFWMFL. The Cytoplasmic segment spans residues 525 to 620; that stretch reads NSVFHFMWVA…QTSGSGYQLV (96 aa).

Belongs to the DHHC palmitoyltransferase family. AKR/ZDHHC17 subfamily. In terms of processing, autopalmitoylated.

The protein resides in the golgi apparatus membrane. Its subcellular location is the cytoplasmic vesicle membrane. It is found in the presynaptic cell membrane. The catalysed reaction is L-cysteinyl-[protein] + hexadecanoyl-CoA = S-hexadecanoyl-L-cysteinyl-[protein] + CoA. It carries out the reaction L-cysteinyl-[protein] + tetradecanoyl-CoA = S-tetradecanoyl-L-cysteinyl-[protein] + CoA. The enzyme catalyses L-cysteinyl-[protein] + octadecanoyl-CoA = S-octadecanoyl-L-cysteinyl-[protein] + CoA. Its function is as follows. Palmitoyltransferase that catalyzes the addition of palmitate onto various protein substrates and is involved in a variety of cellular processes. Has no stringent fatty acid selectivity and in addition to palmitate can also transfer onto target proteins myristate from tetradecanoyl-CoA and stearate from octadecanoyl-CoA. Plays a role in axonogenesis. The polypeptide is Palmitoyltransferase ZDHHC17 (Danio rerio (Zebrafish)).